Here is a 166-residue protein sequence, read N- to C-terminus: Phosphopantetheine adenylyltransferase (166 aa).

Ser-8 serves as a coordination point for substrate. ATP is bound by residues 8–9 and His-16; that span reads SF. Positions 40, 72, and 86 each coordinate substrate. ATP-binding positions include 87–89, Glu-97, and 122–128; these read GLR and YSFLSSS.

This sequence belongs to the bacterial CoaD family. As to quaternary structure, homohexamer. Requires Mg(2+) as cofactor.

It localises to the cytoplasm. The enzyme catalyses (R)-4'-phosphopantetheine + ATP + H(+) = 3'-dephospho-CoA + diphosphate. The protein operates within cofactor biosynthesis; coenzyme A biosynthesis; CoA from (R)-pantothenate: step 4/5. In terms of biological role, reversibly transfers an adenylyl group from ATP to 4'-phosphopantetheine, yielding dephospho-CoA (dPCoA) and pyrophosphate. This Synechococcus elongatus (strain ATCC 33912 / PCC 7942 / FACHB-805) (Anacystis nidulans R2) protein is Phosphopantetheine adenylyltransferase.